Consider the following 417-residue polypeptide: Carboxypeptidase B (417 aa).

Residues 1–16 form the signal peptide; sequence MLAFLILVTVTLASAH. A propeptide spans 17–110 (activation peptide); that stretch reads HSGEHFEGDK…LEAQFDSRVR (94 aa). Residues 118–412 enclose the Peptidase M14 domain; that stretch reads KYNNWETIEA…LAIKYVTSYV (295 aa). Cys-173 and Cys-186 are joined by a disulfide. Zn(2+)-binding residues include His-176 and Glu-179. Substrate is bound by residues 176–179, Arg-234, and 251–252; these read HARE and NR. 2 cysteine pairs are disulfide-bonded: Cys-245/Cys-268 and Cys-259/Cys-273. Residue His-304 coordinates Zn(2+). Residues 305–306 and Tyr-356 contribute to the substrate site; that span reads SY. Residue Glu-378 is the Proton donor/acceptor of the active site.

Belongs to the peptidase M14 family. Zn(2+) is required as a cofactor.

The protein resides in the secreted. It localises to the zymogen granule lumen. The catalysed reaction is Preferential release of a C-terminal lysine or arginine amino acid.. The protein is Carboxypeptidase B (CPB1) of Bos taurus (Bovine).